Here is an 81-residue protein sequence, read N- to C-terminus: Cytochrome b559 subunit alpha (81 aa).

Residues 21–35 traverse the membrane as a helical segment; it reads VIHALTIPALFLAGW. His23 lines the heme pocket.

The protein belongs to the PsbE/PsbF family. In terms of assembly, heterodimer of an alpha subunit and a beta subunit. PSII is composed of 1 copy each of membrane proteins PsbA, PsbB, PsbC, PsbD, PsbE, PsbF, PsbH, PsbI, PsbJ, PsbK, PsbL, PsbM, PsbT, PsbX, PsbY, PsbZ, Psb30/Ycf12, peripheral proteins PsbO, CyanoQ (PsbQ), PsbU, PsbV and a large number of cofactors. It forms dimeric complexes. Heme b serves as cofactor.

The protein localises to the cellular thylakoid membrane. In terms of biological role, this b-type cytochrome is tightly associated with the reaction center of photosystem II (PSII). PSII is a light-driven water:plastoquinone oxidoreductase that uses light energy to abstract electrons from H(2)O, generating O(2) and a proton gradient subsequently used for ATP formation. It consists of a core antenna complex that captures photons, and an electron transfer chain that converts photonic excitation into a charge separation. The polypeptide is Cytochrome b559 subunit alpha (Synechococcus sp. (strain JA-2-3B'a(2-13)) (Cyanobacteria bacterium Yellowstone B-Prime)).